Reading from the N-terminus, the 604-residue chain is Ribosome-inactivating protein PMRIPm (604 aa).

Residues 1-43 (MRVVAAILYINVVVALICGLGIQGGALDLQDYPSVSFQGDAMQ) form the signal peptide. Residue Glu-211 is part of the active site. 3 disulfides stabilise this stretch: Cys-301-Cys-332, Cys-348-Cys-367, and Cys-392-Cys-409. Ricin B-type lectin domains lie at 335–463 (GEPT…WRVG) and 466–598 (VEPI…WLTV). Residues 345-387 (AGWCVDVKDGRDNDGNPIQVLSCGDGQERKQQWTFHRDGTIRS) form a 1-alpha repeat. The stretch at 389 to 429 (LGKCMTAYGFKHGEYVMIYDCDTAIAGANKWVVSIDGTITN) is one 1-beta repeat. One copy of the 1-gamma repeat lies at 432-465 (SGLVLTAPRGATGTTLLVEKNVHAARQCWRVGDD). A 2-alpha repeat occupies 477–521 (QEKCLEANYLENTNVSRYTKVFLDDCVLDRQQQRWALYSDGTIRA). A disulfide bridge links Cys-480 with Cys-502. Asn-490 carries N-linked (GlcNAc...) asparagine glycosylation. The 2-beta repeat unit spans residues 525-563 (RSLRVTADGHRSLDSIIILACKGWGNQRWVFNTDGTILN). A 2-gamma repeat occupies 566-599 (AKLVMDVKDSDVSLLQIILHQSTGKPNQKWLTVT).

This sequence belongs to the ribosome-inactivating protein family. Type 2 RIP subfamily. As to quaternary structure, disulfide-linked dimer of A and B chains. In terms of processing, the precursor is processed in two chains, A and B, that are linked by a disulfide bond. Glycosylated. Post-translationally, the N-terminus is blocked. As to expression, expressed in rhizome and abundantly in leaves (at protein level).

It carries out the reaction Endohydrolysis of the N-glycosidic bond at one specific adenosine on the 28S rRNA.. Its activity is regulated as follows. Strongly inhibited by asialofetuin and asialomucin. Gal/GalNAc-specific agglutinin. Behaves as a type-2 ribosome-inactivating protein. Inhibits mammalian ribosomes. The A chain is responsible for inhibiting protein synthesis through the catalytic inactivation of 60S ribosomal subunits by removing adenine from position 4,324 of 28S rRNA. The B chain binds to cell receptors and probably facilitates the entry into the cell of the A chain; B chains are also responsible for cell agglutination (lectin activity). Involved in plant defense against insects. Has very low cytotoxic activity against the human tumor cell line Molt4, but higher against CEM. The polypeptide is Ribosome-inactivating protein PMRIPm (Polygonatum multiflorum (Solomon's seal)).